A 528-amino-acid chain; its full sequence is GTPase Obg (528 aa).

The 158-residue stretch at 2–159 (ASFVDRVVLH…SDIVLELKSI (158 aa)) folds into the Obg domain. Residues 160–343 (ADIALVGFPS…LGFAMAEIVQ (184 aa)) form the OBG-type G domain. GTP contacts are provided by residues 166–173 (GFPSAGKS), 191–195 (FTTLI), 212–215 (DVPG), 295–298 (NKVD), and 324–326 (SAT). Residues S173 and T193 each contribute to the Mg(2+) site. The OCT domain occupies 363–447 (PRAVNESGFK…DDGVVFDWEP (85 aa)). Positions 471–490 (DRPTRSQKRDEQIERREAKA) are disordered.

This sequence belongs to the TRAFAC class OBG-HflX-like GTPase superfamily. OBG GTPase family. Monomer. Requires Mg(2+) as cofactor.

It is found in the cytoplasm. In terms of biological role, an essential GTPase which binds GTP, GDP and possibly (p)ppGpp with moderate affinity, with high nucleotide exchange rates and a fairly low GTP hydrolysis rate. Plays a role in control of the cell cycle, stress response, ribosome biogenesis and in those bacteria that undergo differentiation, in morphogenesis control. The polypeptide is GTPase Obg (Paenarthrobacter aurescens (strain TC1)).